The following is a 264-amino-acid chain: Glutamate racemase (264 aa).

Residues Asp10–Ser11 and Tyr42–Gly43 contribute to the substrate site. Catalysis depends on Cys73, which acts as the Proton donor/acceptor. Asn74–Thr75 contributes to the substrate binding site. Residue Cys183 is the Proton donor/acceptor of the active site. Residue Thr184–His185 coordinates substrate.

This sequence belongs to the aspartate/glutamate racemases family.

It catalyses the reaction L-glutamate = D-glutamate. It participates in cell wall biogenesis; peptidoglycan biosynthesis. In terms of biological role, provides the (R)-glutamate required for cell wall biosynthesis. The polypeptide is Glutamate racemase (Streptococcus agalactiae serotype Ia (strain ATCC 27591 / A909 / CDC SS700)).